Consider the following 329-residue polypeptide: uncharacterized protein (329 aa).

A disordered region spans residues methionine 1–serine 20.

This is an uncharacterized protein from Mycobacterium tuberculosis (strain CDC 1551 / Oshkosh).